The chain runs to 466 residues: GTPase Der (466 aa).

EngA-type G domains follow at residues 3–166 (PVIA…PEIP) and 177–350 (IKIA…QSAT). GTP is bound by residues 9–16 (GRPNVGKS), 56–60 (DTGGI), 118–121 (NKID), 183–190 (GRPNVGKS), 230–234 (DTAGV), and 295–298 (NKWD). Residues 351 to 435 (DRFSTNYLTR…PIRIEFRTTD (85 aa)) enclose the KH-like domain. The tract at residues 442 to 466 (KKSMTRQQFIQKRRKEERDRNNPRR) is disordered. A compositionally biased stretch (basic and acidic residues) spans 455–466 (RKEERDRNNPRR).

Belongs to the TRAFAC class TrmE-Era-EngA-EngB-Septin-like GTPase superfamily. EngA (Der) GTPase family. Associates with the 50S ribosomal subunit.

In terms of biological role, GTPase that plays an essential role in the late steps of ribosome biogenesis. This Cellvibrio japonicus (strain Ueda107) (Pseudomonas fluorescens subsp. cellulosa) protein is GTPase Der.